The chain runs to 226 residues: Thymidylate kinase (226 aa).

ATP is bound at residue G12 to S19.

It belongs to the thymidylate kinase family.

It catalyses the reaction dTMP + ATP = dTDP + ADP. Phosphorylation of dTMP to form dTDP in both de novo and salvage pathways of dTTP synthesis. In Verminephrobacter eiseniae (strain EF01-2), this protein is Thymidylate kinase.